The following is a 145-amino-acid chain: Acidic phospholipase A2 S1-11 (145 aa).

A signal peptide spans methionine 1–alanine 19. The propeptide occupies serine 20 to leucine 27. Disulfide bonds link cysteine 38–cysteine 99, cysteine 54–cysteine 144, cysteine 56–cysteine 72, cysteine 71–cysteine 127, and cysteine 106–cysteine 118. Ca(2+)-binding residues include tyrosine 55, glycine 57, and glycine 59. Residue histidine 75 is part of the active site. Aspartate 76 contributes to the Ca(2+) binding site. Aspartate 121 is a catalytic residue.

This sequence belongs to the phospholipase A2 family. Group I subfamily. D49 sub-subfamily. The cofactor is Ca(2+). Post-translationally, this enzyme lacks two of the seven disulfide bonds found in similar PLA2 proteins. As to expression, expressed by the venom gland.

The protein resides in the secreted. It carries out the reaction a 1,2-diacyl-sn-glycero-3-phosphocholine + H2O = a 1-acyl-sn-glycero-3-phosphocholine + a fatty acid + H(+). Its function is as follows. Snake venom phospholipase A2 (PLA2) that inhibits collagen-induced platelet aggregation. PLA2 catalyzes the calcium-dependent hydrolysis of the 2-acyl groups in 3-sn-phosphoglycerides. This chain is Acidic phospholipase A2 S1-11, found in Austrelaps superbus (Lowland copperhead snake).